The chain runs to 793 residues: Signal transducer and activator of transcription 5A (793 aa).

Y90 is subject to Phosphotyrosine. S128 is modified (phosphoserine). Positions 589–686 constitute an SH2 domain; it reads WNDGAILGFV…EVFAKYYTPV (98 aa). Phosphotyrosine is present on Y682. Y694 carries the post-translational modification Phosphotyrosine; by JAK2. The tract at residues 772-793 is disordered; sequence DSLDPRLSPPAGLFTSARSSLS. S779 is modified (phosphoserine).

This sequence belongs to the transcription factor STAT family. As to quaternary structure, forms a homodimer or a heterodimer with a related family member. Binds NR3C1. Interacts with NCOA1 and SOCS7. Interacts with ERBB4. Interacts with EBF4. ISGylated. In terms of processing, tyrosine phosphorylated in response to KITLG/SCF, IL2, IL3, IL7, IL15, CSF2/GMCSF, GH1, PRL, EPO and THPO. Activated KIT promotes phosphorylation on tyrosine residues and subsequent translocation to the nucleus. Tyrosine phosphorylated in response to constitutively activated FGFR1, FGFR2, FGFR3 and FGFR4. Tyrosine phosphorylation is required for DNA-binding activity and dimerization. Serine phosphorylation is also required for maximal transcriptional activity. Tyrosine phosphorylated in response to signaling via activated FLT3; wild-type FLT3 results in much weaker phosphorylation than constitutively activated mutant FLT3. Alternatively, can be phosphorylated by JAK2 at Tyr-694. Expressed in heart, lung, and weakly in muscle.

It is found in the cytoplasm. Its subcellular location is the nucleus. Carries out a dual function: signal transduction and activation of transcription. Mediates cellular responses to the cytokine KITLG/SCF and other growth factors. May mediate cellular responses to activated FGFR1, FGFR2, FGFR3 and FGFR4. Binds to the GAS element and activates PRL-induced transcription. Regulates the expression of milk proteins during lactation. The sequence is that of Signal transducer and activator of transcription 5A (Stat5a) from Rattus norvegicus (Rat).